A 625-amino-acid chain; its full sequence is 1-deoxy-D-xylulose-5-phosphate synthase (625 aa).

Thiamine diphosphate is bound by residues His-80 and 121-123 (GHS). Asp-152 is a binding site for Mg(2+). Thiamine diphosphate contacts are provided by residues 153 to 154 (GA), Asn-181, Tyr-288, and Glu-370. Position 181 (Asn-181) interacts with Mg(2+).

Belongs to the transketolase family. DXPS subfamily. In terms of assembly, homodimer. Mg(2+) is required as a cofactor. The cofactor is thiamine diphosphate.

It catalyses the reaction D-glyceraldehyde 3-phosphate + pyruvate + H(+) = 1-deoxy-D-xylulose 5-phosphate + CO2. Its pathway is metabolic intermediate biosynthesis; 1-deoxy-D-xylulose 5-phosphate biosynthesis; 1-deoxy-D-xylulose 5-phosphate from D-glyceraldehyde 3-phosphate and pyruvate: step 1/1. Functionally, catalyzes the acyloin condensation reaction between C atoms 2 and 3 of pyruvate and glyceraldehyde 3-phosphate to yield 1-deoxy-D-xylulose-5-phosphate (DXP). This chain is 1-deoxy-D-xylulose-5-phosphate synthase, found in Alteromonas mediterranea (strain DSM 17117 / CIP 110805 / LMG 28347 / Deep ecotype).